We begin with the raw amino-acid sequence, 173 residues long: Lipoprotein signal peptidase (173 aa).

The next 3 membrane-spanning stretches (helical) occupy residues 12 to 32 (WLWL…WTIQ), 67 to 87 (WQRY…VYLL), and 102 to 122 (ALIL…GYVI). Catalysis depends on residues Asp123 and Asp141. Residues 137 to 157 (FNIADSAIFTGAVIMIFESFF) form a helical membrane-spanning segment.

It belongs to the peptidase A8 family.

It is found in the cell inner membrane. The catalysed reaction is Release of signal peptides from bacterial membrane prolipoproteins. Hydrolyzes -Xaa-Yaa-Zaa-|-(S,diacylglyceryl)Cys-, in which Xaa is hydrophobic (preferably Leu), and Yaa (Ala or Ser) and Zaa (Gly or Ala) have small, neutral side chains.. The protein operates within protein modification; lipoprotein biosynthesis (signal peptide cleavage). Its function is as follows. This protein specifically catalyzes the removal of signal peptides from prolipoproteins. The polypeptide is Lipoprotein signal peptidase (Psychromonas ingrahamii (strain DSM 17664 / CCUG 51855 / 37)).